The sequence spans 624 residues: Kelch-like ECH-associated protein 1 (624 aa).

C38 is subject to S-(2-succinyl)cysteine. The region spanning C77 to E149 is the BTB domain. R135 is covalently cross-linked (N5-[4-(S-L-cysteinyl)-5-methyl-1H-imidazol-2-yl]-L-ornithine (Arg-Cys) (interchain with C-151 in KEAP1)). 2 positions are modified to S-(2-succinyl)cysteine: C151 and C241. C151 carries the S-(2,3-dicarboxypropyl)cysteine; alternate modification. S-nitrosocysteine; alternate is present on C151. An N5-[4-(S-L-cysteinyl)-5-methyl-1H-imidazol-2-yl]-L-ornithine (Cys-Arg) (interchain with R-135 in KEAP1) cross-link involves residue C151. The BACK domain maps to A184–Q286. 2 positions are modified to S-(2,3-dicarboxypropyl)cysteine: C257 and C273. Residues C288 and C319 each carry the S-(2-succinyl)cysteine modification. C288 carries the S-(2,3-dicarboxypropyl)cysteine; alternate modification. Kelch repeat units lie at residues L327–G372, L373–G423, H424–R470, L471–S517, I519–G564, and R565–E611. C434 carries the S-cGMP-cysteine modification. Position 613 is an S-(2-succinyl)cysteine (C613).

The protein belongs to the KEAP1 family. As to quaternary structure, component of the BCR(KEAP1) E3 ubiquitin ligase complex, at least composed of 2 molecules of CUL3, 2 molecules of KEAP1, and RBX1. Interacts with NFE2L2/NRF2; the interaction is direct. Forms a ternary complex with NFE2L2/NRF2 and PGAM5. Interacts with (phosphorylated) SQSTM1/p62; the interaction is direct and inactivates the BCR(KEAP1) complex by sequestering it in inclusion bodies, promoting its degradation. Interacts with NFE2L1. Interacts with BPTF and PTMA. Interacts with MAP1LC3B. Interacts indirectly with ENC1. Interacts with SESN1 and SESN2. Interacts with HSP90AA1 and HSP90AB1. Interacts with PGCKA1; this interaction prevents the ubiquitination of KEAP1 by TRIM25, thus protecting KEAP1 from degradation. In terms of processing, non-enzymatic covalent modifications of reactive cysteines by electrophile metabolites inactivate the BCR(KEAP1) complex. Accumulation of fumarate promotes the formation of cysteine S-succination (S-(2-succinyl)cysteine), leading to inactivate the BCR(KEAP1) complex and promote NFE2L2/NRF2 nuclear accumulation and activation. Nitric oxide-dependent 8-Nitro-cGMP formation promotes cysteine guanylation (S-cGMP-cysteine), leading to NFE2L2/NRF2 nuclear accumulation and activation. Itaconate, an anti-inflammatory metabolite generated in response to lipopolysaccharide, alkylates cysteines, activating NFE2L2/NRF2. Methylglyoxal, a reactive metabolite that accumulates when the glycolytic enzyme PGK1 is inhibited, promotes formation of a methylimidazole cross-link between proximal Cys-151 and Arg-135 on another KEAP1 molecule, resulting in an inactive dimer that inactivates the BCR(KEAP1) complex. Post-translationally, degraded via a proteasomal-independent process during selective autophagy: interaction with phosphorylated SQSTM1/p62 sequesters KEAP1 in inclusion bodies, leading to its degradation. Auto-ubiquitinated by the BCR(KEAP1) complex. Quinone-induced oxidative stress, but not sulforaphane, increases its ubiquitination. Ubiquitination and subsequent degradation is most pronounced following prolonged exposure of cells to oxidative stress, particularly in glutathione-deficient cells that are highly susceptible to oxidative stress. Deubiquitinated by USP25; leading to stabilization. Ubiquitinated by TRIM25; leading to degradation upon ER stress.

The protein resides in the cytoplasm. The protein localises to the nucleus. It participates in protein modification; protein ubiquitination. Ubiquitin ligase activity of the BCR(KEAP1) complex is inhibited by oxidative stress and electrophile metabolites such as sulforaphane. Electrophile metabolites react with reactive cysteine residues in KEAP1 and trigger non-enzymatic covalent modifications of these cysteine residues, leading to inactivate the ubiquitin ligase activity of the BCR(KEAP1) complex. Selective autophagy also inactivates the BCR(KEAP1) complex via interaction between KEAP1 and SQSTM1/p62, which sequesters the complex in inclusion bodies and promotes its degradation. In terms of biological role, substrate-specific adapter of a BCR (BTB-CUL3-RBX1) E3 ubiquitin ligase complex that regulates the response to oxidative stress by targeting NFE2L2/NRF2 for ubiquitination. KEAP1 acts as a key sensor of oxidative and electrophilic stress: in normal conditions, the BCR(KEAP1) complex mediates ubiquitination and degradation of NFE2L2/NRF2, a transcription factor regulating expression of many cytoprotective genes. In response to oxidative stress, different electrophile metabolites trigger non-enzymatic covalent modifications of highly reactive cysteine residues in KEAP1, leading to inactivate the ubiquitin ligase activity of the BCR(KEAP1) complex, promoting NFE2L2/NRF2 nuclear accumulation and expression of phase II detoxifying enzymes. In response to selective autophagy, KEAP1 is sequestered in inclusion bodies following its interaction with SQSTM1/p62, leading to inactivation of the BCR(KEAP1) complex and activation of NFE2L2/NRF2. The BCR(KEAP1) complex also mediates ubiquitination of SQSTM1/p62, increasing SQSTM1/p62 sequestering activity and degradation. The BCR(KEAP1) complex also targets BPTF and PGAM5 for ubiquitination and degradation by the proteasome. The protein is Kelch-like ECH-associated protein 1 of Rattus norvegicus (Rat).